The chain runs to 525 residues: CBL-interacting protein kinase 21 (525 aa).

The Protein kinase domain occupies 87–342; sequence YEMGRALGEG…ITGIRAHEWF (256 aa). Residues 93-101 and K116 each bind ATP; that span reads LGEGHFGKV. D210 acts as the Proton acceptor in catalysis. The tract at residues 228–257 is activation loop; the sequence is DFGLSALPQNQRKDGLLHTTCGSPNYIAPE. Positions 372–401 constitute an NAF domain; it reads DIETSPAISQINAFQLIGMSSCLDLSGFFE. The tract at residues 407–436 is PPI; it reads ERKIRFVSNYSPTSLFEKIESTVTEKGFQV.

It belongs to the protein kinase superfamily. CAMK Ser/Thr protein kinase family. SNF1 subfamily. It depends on Mn(2+) as a cofactor.

The enzyme catalyses L-seryl-[protein] + ATP = O-phospho-L-seryl-[protein] + ADP + H(+). The catalysed reaction is L-threonyl-[protein] + ATP = O-phospho-L-threonyl-[protein] + ADP + H(+). Its function is as follows. CIPK serine-threonine protein kinases interact with CBL proteins. Binding of a CBL protein to the regulatory NAF domain of CIPK protein lead to the activation of the kinase in a calcium-dependent manner. In Oryza sativa subsp. japonica (Rice), this protein is CBL-interacting protein kinase 21 (CIPK21).